We begin with the raw amino-acid sequence, 783 residues long: MSDVLSNDLLQKMDAYWRAANYLSVGQIYLQDNPLLDQKLQLDHIKPRLLGHWGTTPGLNLLYVHLNRLITEHDLDMIYITGPGHGGPGLVANAYLEGTYTERYPAIERSRNGMQRLFRQFSWPHGVPSHVSPETPGSIHEGGELGYSLAHAYGAAFDNPNLIVACVVGDGEAETGALATSWHSNKFLNPARDGAVLPILHLNGFKIANPTVLARITPQELTDLMRGYGYEPHFVEGDDPAVVHQTLAATLERVLGEIRAIQDKARNHGDTERPRWPMIVMRTPKGWTGPKQVDGKPVEGTWRAHQVPIADFKNPEHLTLLEDWMRSYRPDELFDATGKLRDELQALAPTGRRRMSANPHANGGELLEPLSLPDFHDYAVTLTGPGALKAEATRVLGTFLRDVMKNSLESENFRLFGPDETASNRLDAVLQVSPKEWMAAIEDVDVDLSPDGRVMEVLSEHLCQGWLEGYLLTGRHGFFSCYEAFIHIIDSMFNQHAKWLKACATIPWRKPIASLNYLLTSHVWRQDHNGFSHQDPGFIDHVANKKSNVVRIYLPPDANCLLSVADHCLRSRNYVNLIVAGKQPEWQWLDIDAAVRHCTTGAGIWHWASDEGEPDVVMACAGDVPTVETLAAVKLLREYVPDIKIRVVNVVDLMVLQPSSEHPHGLDDRRFDELFTTDKPVIFAFHGYPWLIHRLTYRRRNHVNIHVRGYKEEGTTTTPFDMVVLNDLDRYRLALDAILRIPRLADQRDAATSRYWATMQRHKLYIGEHGDDLPEVRDWRWSA.

This sequence belongs to the XFP family. Thiamine diphosphate serves as cofactor.

The polypeptide is Probable phosphoketolase (Rhodopseudomonas palustris (strain ATCC BAA-98 / CGA009)).